We begin with the raw amino-acid sequence, 67 residues long: Peptide Ctry2606 (67 aa).

The first 23 residues, 1–23 (MKTQTALFSFFLVLLLVATQTEG), serve as a signal peptide directing secretion. Position 33 is a leucine amide (Leu-33). The propeptide occupies 37-67 (ALRNQNFVDYAFDPSLSAADWRALETLLEEY).

This sequence belongs to the non-disulfide-bridged peptide (NDBP) superfamily. Short antimicrobial peptide (group 4) family. Expressed by the venom gland.

It localises to the secreted. Its function is as follows. Antimicrobial peptide. The chain is Peptide Ctry2606 from Chaerilus tryznai (Scorpion).